The following is a 394-amino-acid chain: Stabilizer of axonemal microtubules 2 (394 aa).

Mn regions lie at residues 110 to 122 (STTFQDDYVPQEI), 144 to 158 (DTSHRRDYVPHQLEV), 244 to 256 (NSTSHLDYVPYQA), 278 to 292 (KSTTKEDFPAWEICR), 312 to 324 (LSTFRSHFVPHEL), and 346 to 360 (VTMYSIQFTPKKQEI).

The protein belongs to the FAM154 family.

This Mus musculus (Mouse) protein is Stabilizer of axonemal microtubules 2 (Saxo2).